Here is a 94-residue protein sequence, read N- to C-terminus: Protein SpdA (94 aa).

Residues 41-68 (GPILLALVAAGGSVGVVMTLCLLLQTAA) traverse the membrane as a helical segment.

Its subcellular location is the cell membrane. Involved in plasmid transfer. In Streptomyces lividans, this protein is Protein SpdA (spdA).